We begin with the raw amino-acid sequence, 396 residues long: Na(+)/H(+) antiporter NhaA (396 aa).

11 consecutive transmembrane segments (helical) span residues 17 to 37 (FSGLLLILFCFLAIFISNTNF), 59 to 79 (FSLTNIVNDILMTFFFLEIGI), 97 to 117 (ILPGIAAIGGMIFPALIYNFI), 127 to 147 (GWAITVATDIAFAVGVLKILG), 156 to 176 (IFLLSLAIFDDIGAILIIAFF), 181 to 201 (IDQYMILLSTLVILTILSINY), 206 to 226 (CIYIYIIFGILLWESIFLSGI), 260 to 280 (SLSFLNKYFILPIFAFFNSGI), 292 to 312 (LLPFGIFFGLVLGKPIGVFLF), 333 to 353 (IAGISFLCGIGFTMSIFISNL), and 368 to 388 (FSILISSIVSSVIGFLFLYFL).

This sequence belongs to the NhaA Na(+)/H(+) (TC 2.A.33) antiporter family.

It is found in the cell membrane. The enzyme catalyses Na(+)(in) + 2 H(+)(out) = Na(+)(out) + 2 H(+)(in). Na(+)/H(+) antiporter that extrudes sodium in exchange for external protons. The protein is Na(+)/H(+) antiporter NhaA of Wigglesworthia glossinidia brevipalpis.